The chain runs to 280 residues: Nucleotide-binding protein Mfla_0145 (280 aa).

G8–S15 lines the ATP pocket. Position 57–60 (D57–S60) interacts with GTP.

It belongs to the RapZ-like family.

Displays ATPase and GTPase activities. The protein is Nucleotide-binding protein Mfla_0145 of Methylobacillus flagellatus (strain ATCC 51484 / DSM 6875 / VKM B-1610 / KT).